Reading from the N-terminus, the 99-residue chain is N(2)-fixation sustaining protein CowN (99 aa).

Belongs to the CowN family.

Is required to sustain N(2)-dependent growth in the presence of low levels of carbon monoxide (CO). Probably acts by protecting the N(2) fixation ability of the nitrogenase complex, which is inactivated in the presence of CO. This is N(2)-fixation sustaining protein CowN from Magnetococcus marinus (strain ATCC BAA-1437 / JCM 17883 / MC-1).